Reading from the N-terminus, the 158-residue chain is Ribosome maturation factor RimP (158 aa).

Belongs to the RimP family.

Its subcellular location is the cytoplasm. In terms of biological role, required for maturation of 30S ribosomal subunits. This is Ribosome maturation factor RimP from Aquifex aeolicus (strain VF5).